A 306-amino-acid polypeptide reads, in one-letter code: MNWITNYVRPKINSILGRREIPENLWIKDPTSGEMIFHKDLEANQFVAPNSGHHMRISAKNRLMHFFDDGVYTALENPKVVTDPLKFRDEKRYIDRLKDYRSKLGVDDNILSARGTIEGLPIIATVQDFAFMGGSLGMASGEAIIKAFDTAIAERRPLVLFSASGGARMQEGTLSLMQMPRTTVAIEMLKEAKLPYIVVLTNPTTGGVTASYAMLGDIHIAEPGAMIGFAGPRVIQQTIRETLPEGFQSSEYLLEHGMIDMVVSRLEMKTTIARLLRLMMKRPAVFNPSDPSPTDSQTSLSTTKAA.

In terms of domain architecture, CoA carboxyltransferase N-terminal spans 25-294 (LWIKDPTSGE…VFNPSDPSPT (270 aa)). The tract at residues 286–306 (FNPSDPSPTDSQTSLSTTKAA) is disordered. Over residues 288–306 (PSDPSPTDSQTSLSTTKAA) the composition is skewed to low complexity.

This sequence belongs to the AccD/PCCB family. As to quaternary structure, acetyl-CoA carboxylase is a heterohexamer composed of biotin carboxyl carrier protein (AccB), biotin carboxylase (AccC) and two subunits each of ACCase subunit alpha (AccA) and ACCase subunit beta (AccD).

It localises to the cytoplasm. It carries out the reaction N(6)-carboxybiotinyl-L-lysyl-[protein] + acetyl-CoA = N(6)-biotinyl-L-lysyl-[protein] + malonyl-CoA. The protein operates within lipid metabolism; malonyl-CoA biosynthesis; malonyl-CoA from acetyl-CoA: step 1/1. Component of the acetyl coenzyme A carboxylase (ACC) complex. Biotin carboxylase (BC) catalyzes the carboxylation of biotin on its carrier protein (BCCP) and then the CO(2) group is transferred by the transcarboxylase to acetyl-CoA to form malonyl-CoA. This Bartonella grahamii (strain as4aup) protein is Acetyl-coenzyme A carboxylase carboxyl transferase subunit beta.